A 432-amino-acid chain; its full sequence is Hexane cyclase pydB (432 aa).

The signal sequence occupies residues 1 to 20 (MMHQSLGLGLVVFVAAPVVA). 4 N-linked (GlcNAc...) asparagine glycosylation sites follow: asparagine 59, asparagine 78, asparagine 153, and asparagine 308.

Belongs to the Diels-Alderase family.

The protein operates within mycotoxin biosynthesis. Its function is as follows. Hexane cyclase; part of the gene cluster that mediates the biosynthesis of pyrrocidines, fungal natural products containing a macrocyclic para-cyclophane connected to a decahydrofluorene ring system that show potent antibiotic activities toward Gram-negative bacteria. Within the pathway, pydB functions synergistically with pydE, pydX and pydZ to form the cyclophane. The pathway begins with the PKS-NRPS pydA which, with the help of the trans-enoyl reductase pydC, synthesizes the polyketide-tyrosyl acyl thioester product which can be reductively off-loaded by the terminal reductase (R) domain in pydA. The alpha/beta hydrolase pydG is then required to catalyze the subsequent Knoevenagel condensation that affords the 3-pyrrolin-2-one ring, whereas the four proteins pydB, pydE, pydX and pydZ then function synergistically to form the cyclophane. PydB and the membrane-bound pydX and pydZ are lipid-binding proteins that can sequester and mold the pdyG product into the inverse S-shape. Binding of the medium chain reductase pydE to the complex would trigger the cascade oxidative cyclization. PydY is involved the Diels-Alder cycloaddition that forms the decahydrofluorene core. Additional non-enzymatic hydroxylation yields pyrrocidine A2 which can be further reduced into pyrrocidine B by an endogenous reductase. The protein is Hexane cyclase pydB of Acremonium sp.